The following is a 151-amino-acid chain: MNNDKLQRMVENLSEEKFGRTFRHCAYFNKRLRTTGGRYLLKSHDIEINPKQYEHYGEDAVVKIILHELCHYHLHIAGKGYQHKDQDFKRLSQQVGAPRFCNSIESYQQRANYEYYCTKCHAKYIRIRKVDTNRMRCGHCNGKLRMKRQLK.

The SprT-like domain maps to 6 to 147 (LQRMVENLSE…GHCNGKLRMK (142 aa)). Residue His67 participates in Zn(2+) binding. The active site involves Glu68. Residue His71 participates in Zn(2+) binding.

This sequence belongs to the SprT family. Zn(2+) is required as a cofactor.

Its subcellular location is the cytoplasm. In Staphylococcus aureus (strain Mu3 / ATCC 700698), this protein is Protein SprT-like.